We begin with the raw amino-acid sequence, 328 residues long: Biotin synthase (328 aa).

One can recognise a Radical SAM core domain in the interval 43-272 (NVVQKASLLS…KSTVRLSAGR (230 aa)). 3 residues coordinate [4Fe-4S] cluster: Cys-58, Cys-62, and Cys-65. [2Fe-2S] cluster contacts are provided by Cys-103, Cys-135, Cys-195, and Arg-267.

The protein belongs to the radical SAM superfamily. Biotin synthase family. As to quaternary structure, homodimer. [4Fe-4S] cluster serves as cofactor. It depends on [2Fe-2S] cluster as a cofactor.

The catalysed reaction is (4R,5S)-dethiobiotin + (sulfur carrier)-SH + 2 reduced [2Fe-2S]-[ferredoxin] + 2 S-adenosyl-L-methionine = (sulfur carrier)-H + biotin + 2 5'-deoxyadenosine + 2 L-methionine + 2 oxidized [2Fe-2S]-[ferredoxin]. Its pathway is cofactor biosynthesis; biotin biosynthesis; biotin from 7,8-diaminononanoate: step 2/2. Its function is as follows. Catalyzes the conversion of dethiobiotin (DTB) to biotin by the insertion of a sulfur atom into dethiobiotin via a radical-based mechanism. In Allorhizobium ampelinum (strain ATCC BAA-846 / DSM 112012 / S4) (Agrobacterium vitis (strain S4)), this protein is Biotin synthase.